A 569-amino-acid chain; its full sequence is Endonuclease/exonuclease/phosphatase family domain-containing protein 1 (569 aa).

The interval 1–20 (MGSTLGCHRSIPRDPSDLSH) is disordered. A lipid anchor (N-myristoyl glycine) is attached at glycine 2. Residues 11 to 20 (IPRDPSDLSH) show a composition bias toward basic and acidic residues. Residues serine 16, serine 21, and serine 25 each carry the phosphoserine modification. The HhH domain maps to 38–67 (ERLNINTATEEELMTLPGVTRAVARSIVEY). Phosphoserine occurs at positions 106, 110, 160, and 173. Positions 200-225 (SRPPSTHTNGGLTFTAKPHPSPTSLS) are disordered. Residues 202-211 (PPSTHTNGGL) show a composition bias toward polar residues. At threonine 265 the chain carries Phosphothreonine. The residue at position 428 (serine 428) is a Phosphoserine. Residues 545 to 569 (SKKDAPRNGSGVALERSEANIKHER) are disordered. The segment covering 559 to 569 (ERSEANIKHER) has biased composition (basic and acidic residues).

This chain is Endonuclease/exonuclease/phosphatase family domain-containing protein 1 (EEPD1), found in Homo sapiens (Human).